A 346-amino-acid polypeptide reads, in one-letter code: Leucine zipper protein 2 (346 aa).

The N-terminal stretch at 1-17 is a signal peptide; that stretch reads MKFIGAVYLLFLLPALS. N-linked (GlcNAc...) asparagine glycosylation is found at Asn19 and Asn131. Residues 41-209 are a coiled coil; the sequence is RHLSKTSKEL…QLKALKDTVH (169 aa). The interval 162 to 190 is leucine-zipper; it reads LRYGKKDLIFKGQQLMDLENKLKVAKDEL. 2 N-linked (GlcNAc...) asparagine glycosylation sites follow: Asn241 and Asn296. Positions 271–346 are disordered; that stretch reads SAVMRRESTG…LKKTQSDKHN (76 aa). The segment covering 293–324 has biased composition (polar residues); the sequence is CSHNQTESSSVMKKTFGHSQSKTPEQNGQGQA. Basic and acidic residues predominate over residues 326–346; the sequence is TAEESVKTDGELKKTQSDKHN.

It is found in the secreted. The protein is Leucine zipper protein 2 (luzp2) of Danio rerio (Zebrafish).